Consider the following 576-residue polypeptide: Vesicular glutamate transporter 1 (576 aa).

Residues 1–63 are Cytoplasmic-facing; the sequence is MEFRKEEFKK…CTCFGLPRRY (63 aa). A helical membrane pass occupies residues 64-84; sequence IIAIMSGLGFCISFGIRCNLG. Residues 85–116 are Vesicular-facing; sequence VAIVSMVNNNTVYKGNKLVIEQAQFNWDPETV. N-linked (GlcNAc...) asparagine glycosylation is present at Asn-93. Residues 117 to 137 form a helical membrane-spanning segment; it reads GMIHGSFFWGYIVTQIPGGYI. Residues 138–140 lie on the Cytoplasmic side of the membrane; that stretch reads CQK. Residues 141–161 traverse the membrane as a helical segment; it reads FAANRVFGFAIVATSTLNMLI. The Vesicular segment spans residues 162-168; it reads PSAARVH. The helical transmembrane segment at 169–189 threads the bilayer; the sequence is FACVICVRILQGLVEGVTYPA. At 190–208 the chain is on the cytoplasmic side; it reads CHGIWSKWAPPLERSRLAT. The helical transmembrane segment at 209–229 threads the bilayer; it reads TAFCGSYAGAVVAMPLAGVLV. Residues 230-236 lie on the Vesicular side of the membrane; sequence QYSGWSS. Residues 237–257 traverse the membrane as a helical segment; sequence VFYVYGSFGITWYMFWILVSY. The Cytoplasmic segment spans residues 258–297; sequence ESPAQHPTISEEERKYIEESIGESTGFMNPMAKFKAPWRK. Residues 298-320 traverse the membrane as a helical segment; that stretch reads FFTSMPVYAIIVANFCRSWTFYL. Residues 321–341 are Vesicular-facing; the sequence is LLISQPAYFEEVFGFAISKVG. Residues 342–362 traverse the membrane as a helical segment; that stretch reads LLSALPHLVMTIIVPIGGQIA. Over 363–378 the chain is Cytoplasmic; that stretch reads DFLRTKRIMSTTNVRK. A helical transmembrane segment spans residues 379-399; the sequence is MMNCGGFGMEATLLLVVGYSH. Residues 400–401 are Vesicular-facing; the sequence is SR. Residues 402 to 422 traverse the membrane as a helical segment; sequence GVAISFLVLAVGFSGFAISGF. The Cytoplasmic portion of the chain corresponds to 423–435; the sequence is NVNHLDIAPRYAS. The helical transmembrane segment at 436 to 456 threads the bilayer; the sequence is ILMGISNGVGTLSGMVCPLIV. Residues 457–469 are Vesicular-facing; it reads GAMTKHKTREEWQ. The helical transmembrane segment at 470–490 threads the bilayer; it reads YVFLIASLVHYGGVVFYGIFA. Topologically, residues 491–576 are cytoplasmic; it reads SGEKQPWAEP…YGTVAERDLS (86 aa). The segment at 517–552 is disordered; sequence ADESEEQTQAHGGYGSYGATQTTSQQNGGWATDWEK. Positions 534-545 are enriched in polar residues; sequence GATQTTSQQNGG.

Belongs to the major facilitator superfamily. Sodium/anion cotransporter family. VGLUT subfamily.

The protein localises to the cytoplasmic vesicle. Its subcellular location is the secretory vesicle. It is found in the synaptic vesicle membrane. It localises to the cell membrane. The protein resides in the synapse. The protein localises to the synaptosome. The enzyme catalyses L-glutamate(out) = L-glutamate(in). It catalyses the reaction chloride(in) = chloride(out). It carries out the reaction 3 Na(+)(out) + phosphate(out) = 3 Na(+)(in) + phosphate(in). The catalysed reaction is phosphate(in) = phosphate(out). The enzyme catalyses K(+)(in) + H(+)(out) = K(+)(out) + H(+)(in). With respect to regulation, chloride channel activity is allosterically activated by lumenal H(+) and Cl(-) leading to synaptic vesicles acidification. The L-glutamate transport activity is allosterically activated by lumenal H(+) and Cl(-). The allosteric activation by H(+) efficiently prevents non-vesicular efflux across the plasma membrane, thereby restricting L-glutamate transport activity to acidic membranes such as synaptic vesicles. In terms of biological role, multifunctional transporter that transports L-glutamate as well as multiple ions such as chloride, proton, potassium, sodium and phosphate. At the synaptic vesicle membrane, mainly functions as an uniporter which transports preferentially L-glutamate but also phosphate from the cytoplasm into synaptic vesicles at presynaptic nerve terminals of excitatory neural cells. The L-glutamate or phosphate uniporter activity is electrogenic and is driven by the proton electrochemical gradient, mainly by the electrical gradient established by the vacuolar H(+)-ATPase across the synaptic vesicle membrane. In addition, functions as a chloride channel that allows a chloride permeation through the synaptic vesicle membrane that affects the proton electrochemical gradient and promotes synaptic vesicles acidification. Moreover, may function as a K(+)/H(+) antiport allowing to maintain the electrical gradient and to decrease chemical gradient and therefore sustain vesicular glutamate uptake. The vesicular K(+)/H(+) antiport activity is electroneutral. At the plasma membrane, following exocytosis, functions as a symporter of Na(+) and phosphate from the extracellular space to the cytoplasm allowing synaptic phosphate homeostasis regulation. The symporter activity is driven by an inside negative membrane potential and is electrogenic. Is necessary for synaptic signaling of visual-evoked responses from photoreceptors. The sequence is that of Vesicular glutamate transporter 1 from Xenopus laevis (African clawed frog).